A 315-amino-acid chain; its full sequence is Ribosomal RNA small subunit methyltransferase H (315 aa).

The interval 1-21 is disordered; it reads MNVVNVVPMHLPPPPPRPRGE. Residues 51–53, D69, F96, D117, and Q124 contribute to the S-adenosyl-L-methionine site; that span reads GGH. The segment at 281–315 is disordered; that stretch reads KKPVTAGDDEVEGNPRARSAKLRAARRVGGAEALA.

It belongs to the methyltransferase superfamily. RsmH family.

It is found in the cytoplasm. It carries out the reaction cytidine(1402) in 16S rRNA + S-adenosyl-L-methionine = N(4)-methylcytidine(1402) in 16S rRNA + S-adenosyl-L-homocysteine + H(+). Functionally, specifically methylates the N4 position of cytidine in position 1402 (C1402) of 16S rRNA. The sequence is that of Ribosomal RNA small subunit methyltransferase H from Sorangium cellulosum (strain So ce56) (Polyangium cellulosum (strain So ce56)).